Reading from the N-terminus, the 161-residue chain is Large ribosomal subunit protein bL9 (161 aa).

Belongs to the bacterial ribosomal protein bL9 family.

Binds to the 23S rRNA. This chain is Large ribosomal subunit protein bL9, found in Blochmanniella floridana.